Here is a 408-residue protein sequence, read N- to C-terminus: Acetate kinase (408 aa).

Residue asparagine 10 participates in Mg(2+) binding. ATP is bound at residue lysine 17. Residue arginine 96 participates in substrate binding. Residue aspartate 153 is the Proton donor/acceptor of the active site. ATP-binding positions include 213 to 217 (HLGNG) and 288 to 290 (DLR). Glutamate 393 serves as a coordination point for Mg(2+).

This sequence belongs to the acetokinase family. As to quaternary structure, homodimer. It depends on Mg(2+) as a cofactor. The cofactor is Mn(2+).

It is found in the cytoplasm. It carries out the reaction acetate + ATP = acetyl phosphate + ADP. Its pathway is metabolic intermediate biosynthesis; acetyl-CoA biosynthesis; acetyl-CoA from acetate: step 1/2. In terms of biological role, catalyzes the formation of acetyl phosphate from acetate and ATP. Can also catalyze the reverse reaction. This is Acetate kinase from Borrelia duttonii (strain Ly).